Consider the following 265-residue polypeptide: Phosphonoacetaldehyde hydrolase (265 aa).

Asp-9 serves as the catalytic Nucleophile. Residues Asp-9 and Ala-11 each coordinate Mg(2+). Lys-50 acts as the Schiff-base intermediate with substrate in catalysis. Asp-184 contributes to the Mg(2+) binding site.

The protein belongs to the HAD-like hydrolase superfamily. PhnX family. In terms of assembly, homodimer. The cofactor is Mg(2+).

It catalyses the reaction phosphonoacetaldehyde + H2O = acetaldehyde + phosphate + H(+). In terms of biological role, involved in phosphonate degradation. This chain is Phosphonoacetaldehyde hydrolase, found in Lactiplantibacillus plantarum (strain ATCC BAA-793 / NCIMB 8826 / WCFS1) (Lactobacillus plantarum).